The chain runs to 57 residues: MFKYTRFEKARIIGARALQIAMGAPVLIDVPEGITPLEAAIMEFEKGVIPITVIRPS.

The protein belongs to the archaeal Rpo6/eukaryotic RPB6 RNA polymerase subunit family. As to quaternary structure, part of the RNA polymerase complex.

Its subcellular location is the cytoplasm. The catalysed reaction is RNA(n) + a ribonucleoside 5'-triphosphate = RNA(n+1) + diphosphate. In terms of biological role, DNA-dependent RNA polymerase (RNAP) catalyzes the transcription of DNA into RNA using the four ribonucleoside triphosphates as substrates. This chain is DNA-directed RNA polymerase subunit Rpo6, found in Pyrococcus abyssi (strain GE5 / Orsay).